We begin with the raw amino-acid sequence, 384 residues long: 8-amino-7-oxononanoate synthase (384 aa).

Residue Arg-21 participates in substrate binding. 108 to 109 (GF) contributes to the pyridoxal 5'-phosphate binding site. Position 133 (His-133) interacts with substrate. The pyridoxal 5'-phosphate site is built by Ser-179, His-207, and Thr-233. An N6-(pyridoxal phosphate)lysine modification is found at Lys-236. Thr-352 contributes to the substrate binding site.

The protein belongs to the class-II pyridoxal-phosphate-dependent aminotransferase family. BioF subfamily. Homodimer. Pyridoxal 5'-phosphate is required as a cofactor.

The enzyme catalyses 6-carboxyhexanoyl-[ACP] + L-alanine + H(+) = (8S)-8-amino-7-oxononanoate + holo-[ACP] + CO2. It functions in the pathway cofactor biosynthesis; biotin biosynthesis. In terms of biological role, catalyzes the decarboxylative condensation of pimeloyl-[acyl-carrier protein] and L-alanine to produce 8-amino-7-oxononanoate (AON), [acyl-carrier protein], and carbon dioxide. This Escherichia coli (strain UTI89 / UPEC) protein is 8-amino-7-oxononanoate synthase.